The following is a 259-amino-acid chain: Protein unc-50 homolog (259 aa).

Methionine 1 is subject to N-acetylmethionine. The Cytoplasmic segment spans residues 1 to 82; the sequence is MLPSTSLNSS…TKDQWARDDP (82 aa). Residue serine 6 is modified to Phosphoserine. A helical transmembrane segment spans residues 83–103; sequence AFLVLLSIWLCVSTIGFGFVL. The Lumenal segment spans residues 104-115; sequence DMGFFETIKLLL. Residues 116–136 traverse the membrane as a helical segment; that stretch reads WVVFIDCVGVGLLISTLMWFI. Residues 137–163 are Cytoplasmic-facing; the sequence is SNKYLVKRQSRDYDVEWGYAFDVHLNA. A helical transmembrane segment spans residues 164–184; that stretch reads FYPLLVILHFIQLFFINHVIL. The Lumenal portion of the chain corresponds to 185–187; the sequence is TDT. The chain crosses the membrane as a helical span at residues 188–208; sequence FIGYLVGNTLWLIAVGYYIYV. Over 209-222 the chain is Cytoplasmic; that stretch reads TFLGYSALPFLKNT. Residues 223–243 form a helical membrane-spanning segment; that stretch reads VVLLYPFAPLIVLYGLSLALG. Residues 244–259 lie on the Lumenal side of the membrane; the sequence is WNFTHTLCSFYKYRVK.

Belongs to the unc-50 family. Expressed in brain, kidney and testis, and at lower levels in heart.

The protein localises to the nucleus inner membrane. It localises to the golgi apparatus membrane. In terms of biological role, involved in the cell surface expression of neuronal nicotinic receptors. Binds RNA. In Rattus norvegicus (Rat), this protein is Protein unc-50 homolog (Unc50).